The following is a 509-amino-acid chain: 5-OH-xanthotoxin synthase (509 aa).

A helical membrane pass occupies residues Ala5–His25. Residues Thr368–Ile373 are substrate specificity. Cys449 contacts heme.

Belongs to the cytochrome P450 family. Requires heme as cofactor.

The protein resides in the microsome membrane. It catalyses the reaction xanthotoxin + reduced [NADPH--hemoprotein reductase] + O2 = 5-hydroxyxanthotoxin + oxidized [NADPH--hemoprotein reductase] + H2O + 2 H(+). Its pathway is secondary metabolite biosynthesis. Its function is as follows. Involved in the biosynthesis of coumarins and furanocoumarins (FCs), natural products required for defense responses against attacks by predators with potential medical and agroindustrial usages such as anticoagulant, rodenticide and artificial vanilla substitutes. Catalyzes the conversion of xanthotoxin into 5-hydroxyxanthotoxin. This is 5-OH-xanthotoxin synthase from Ammi majus (Bishop's weed).